We begin with the raw amino-acid sequence, 563 residues long: Delta-1-pyrroline-5-carboxylate dehydrogenase, mitochondrial (563 aa).

The N-terminal 24 residues, 1–24 (MLLPAPALRRALLSRPWTGAGLRW), are a transit peptide targeting the mitochondrion. At lysine 31 the chain carries N6-succinyllysine. Position 44 is a phosphoserine (serine 44). Residue lysine 52 is modified to N6-acetyllysine. Lysine 93, lysine 99, lysine 114, lysine 130, and lysine 175 each carry N6-acetyllysine; alternate. N6-succinyllysine; alternate occurs at positions 93, 99, 114, 130, and 175. Residues serine 208, lysine 233, and 286-290 (GSVPT) each bind NAD(+). Glutamate 314 functions as the Proton acceptor in the catalytic mechanism. Lysine 318 carries the N6-acetyllysine modification. Lysine 347 carries the post-translational modification N6-succinyllysine. Cysteine 348 serves as the catalytic Nucleophile. 2 positions are modified to N6-acetyllysine: lysine 365 and lysine 376. Lysine 395 bears the N6-succinyllysine mark. Glutamate 447 serves as a coordination point for NAD(+). Lysine 462 is modified (N6-acetyllysine). The residue at position 509 (lysine 509) is an N6-acetyllysine; alternate. Lysine 509 carries the N6-succinyllysine; alternate modification. Serine 513 is a substrate binding site. Residues lysine 531 and lysine 552 each carry the N6-acetyllysine modification.

The protein belongs to the aldehyde dehydrogenase family. In terms of assembly, homodimer. As to expression, highest expression is found in liver followed by skeletal muscle, kidney, heart, brain, placenta, lung and pancreas.

It is found in the mitochondrion matrix. It catalyses the reaction L-glutamate 5-semialdehyde + NAD(+) + H2O = L-glutamate + NADH + 2 H(+). The protein operates within amino-acid degradation; L-proline degradation into L-glutamate; L-glutamate from L-proline: step 2/2. Its function is as follows. Irreversible conversion of delta-1-pyrroline-5-carboxylate (P5C), derived either from proline or ornithine, to glutamate. This is a necessary step in the pathway interconnecting the urea and tricarboxylic acid cycles. The preferred substrate is glutamic gamma-semialdehyde, other substrates include succinic, glutaric and adipic semialdehydes. In Homo sapiens (Human), this protein is Delta-1-pyrroline-5-carboxylate dehydrogenase, mitochondrial (ALDH4A1).